Reading from the N-terminus, the 227-residue chain is Thymidylate synthase (227 aa).

DUMP is bound at residue 89–90; the sequence is RR. Cysteine 109 serves as the catalytic Nucleophile. Residues 129 to 132, asparagine 140, and 170 to 172 contribute to the dUMP site; these read RSND and HVY. Aspartate 132 is a binding site for (6R)-5,10-methylene-5,6,7,8-tetrahydrofolate.

This sequence belongs to the thymidylate synthase family. Bacterial-type ThyA subfamily. As to quaternary structure, homodimer.

The protein resides in the cytoplasm. The catalysed reaction is dUMP + (6R)-5,10-methylene-5,6,7,8-tetrahydrofolate = 7,8-dihydrofolate + dTMP. Its pathway is pyrimidine metabolism; dTTP biosynthesis. In terms of biological role, catalyzes the reductive methylation of 2'-deoxyuridine-5'-monophosphate (dUMP) to 2'-deoxythymidine-5'-monophosphate (dTMP) while utilizing 5,10-methylenetetrahydrofolate (mTHF) as the methyl donor and reductant in the reaction, yielding dihydrofolate (DHF) as a by-product. This enzymatic reaction provides an intracellular de novo source of dTMP, an essential precursor for DNA biosynthesis. This Bacillus atrophaeus protein is Thymidylate synthase.